We begin with the raw amino-acid sequence, 104 residues long: uncharacterized protein (104 aa).

This is an uncharacterized protein from Haemophilus influenzae (strain ATCC 51907 / DSM 11121 / KW20 / Rd).